Here is an 808-residue protein sequence, read N- to C-terminus: Sucrose synthase isoform 1 (808 aa).

A GT-B glycosyltransferase region spans residues 277 to 754; the sequence is MVFNVVILSP…GLKRIQEKYT (478 aa).

The protein belongs to the glycosyltransferase 1 family. Plant sucrose synthase subfamily. As to quaternary structure, homotetramer. As to expression, expressed in stems, in roots at different developmental stages, and in flower buds, flowers and maturing seeds, with the highest levels in strong utilization sinks for sucrose such as growing stems and tap root tips.

It catalyses the reaction an NDP-alpha-D-glucose + D-fructose = a ribonucleoside 5'-diphosphate + sucrose + H(+). With respect to regulation, fructose acts as a non-competitive inhibitor with an inhibition constant of 17.2 mM. In contrast, glucose inhibits uncompetitively with an inhibition constant of 4.3 mM. In terms of biological role, sucrose-cleaving enzyme that provides UDP-glucose and fructose for various metabolic pathways. The protein is Sucrose synthase isoform 1 of Daucus carota (Wild carrot).